A 480-amino-acid polypeptide reads, in one-letter code: Probable cobyric acid synthase (480 aa).

The 186-residue stretch at 246 to 431 (PVRIAVIRLP…MHGLFLNPSA (186 aa)) folds into the GATase cobBQ-type domain. The active-site Nucleophile is the Cys325. His423 is an active-site residue.

It belongs to the CobB/CobQ family. CobQ subfamily.

Its pathway is cofactor biosynthesis; adenosylcobalamin biosynthesis. Its function is as follows. Catalyzes amidations at positions B, D, E, and G on adenosylcobyrinic A,C-diamide. NH(2) groups are provided by glutamine, and one molecule of ATP is hydrogenolyzed for each amidation. This Methanoregula boonei (strain DSM 21154 / JCM 14090 / 6A8) protein is Probable cobyric acid synthase.